Here is a 608-residue protein sequence, read N- to C-terminus: Phosphogluconate dehydratase (608 aa).

[4Fe-4S] cluster contacts are provided by C154 and C221.

The protein belongs to the IlvD/Edd family. [4Fe-4S] cluster is required as a cofactor.

It carries out the reaction 6-phospho-D-gluconate = 2-dehydro-3-deoxy-6-phospho-D-gluconate + H2O. It functions in the pathway carbohydrate metabolism; Entner-Doudoroff pathway. In terms of biological role, catalyzes the dehydration of 6-phospho-D-gluconate to 2-dehydro-3-deoxy-6-phospho-D-gluconate. This is Phosphogluconate dehydratase from Pseudomonas aeruginosa (strain ATCC 15692 / DSM 22644 / CIP 104116 / JCM 14847 / LMG 12228 / 1C / PRS 101 / PAO1).